The following is a 180-amino-acid chain: MFHLRTCAAKSVHKSWDIFFRNTNAGAPPGTAYQSPLSLSRLGFYGLHESDLDKSTRFEEFLQRGRLNVLANVIRYHLGMYHRRSSPYPTDVARICEEAFTRRQILLPFRKPLIVFTPKSLLRHPEARTSFDEMLPGTHFQRVYYDLTRAKPVWYAGRKTHLTELQRFLDTAFDLDAFKK.

Position 14 is an N6-succinyllysine (Lys-14). Ser-40 is subject to Phosphoserine. Arg-64 provides a ligand contact to thiamine diphosphate.

It belongs to the alpha-ketoglutarate dehydrogenase family. In terms of assembly, homodimer. The 2-oxoglutarate dehydrogenase complex is composed of OGDH (2-oxoglutarate dehydrogenase; E1), DLST (dihydrolipoamide succinyltransferase; E2) and DLD (dihydrolipoamide dehydrogenase; E3). It contains multiple copies of the three enzymatic components (E1, E2 and E3). In the nucleus, the 2-oxoglutarate dehydrogenase complex associates with KAT2A. Interacts with ABHD11; this interaction maintains the functional lipoylation of the 2-oxoglutarate dehydrogenase complex. It depends on thiamine diphosphate as a cofactor. Mg(2+) serves as cofactor.

It is found in the mitochondrion matrix. It localises to the nucleus. It catalyses the reaction N(6)-[(R)-lipoyl]-L-lysyl-[protein] + 2-oxoglutarate + H(+) = N(6)-[(R)-S(8)-succinyldihydrolipoyl]-L-lysyl-[protein] + CO2. With respect to regulation, calcium ions and ADP stimulate, whereas ATP and NADH reduce catalytic activity. Its function is as follows. 2-oxoglutarate dehydrogenase (E1) component of the 2-oxoglutarate dehydrogenase complex (OGDHC), which mediates the decarboxylation of alpha-ketoglutarate. The 2-oxoglutarate dehydrogenase complex catalyzes the overall conversion of 2-oxoglutarate to succinyl-CoA and CO(2). The 2-oxoglutarate dehydrogenase complex is mainly active in the mitochondrion. A fraction of the 2-oxoglutarate dehydrogenase complex also localizes in the nucleus and is required for lysine succinylation of histones: associates with KAT2A on chromatin and provides succinyl-CoA to histone succinyltransferase KAT2A. The protein is 2-oxoglutarate dehydrogenase, mitochondrial of Mesocricetus auratus (Golden hamster).